A 373-amino-acid chain; its full sequence is MHNAAPITRRKSKRIYVGKVPVGDGAPIAVQSMTNTRTTDVEATVNQIRSLERVGVDIVRVSVPTMDAAEAFKLIKQQVNVPLVADIHFDYRIALKVAEYGVDCLRINPGNIGNEERIRSVVDCARYNNIPIRIGVNGGSLEKDLQEKYGEPTPEALLESAMRHVDILDRLNFDQFKVSVKASDVFLAVQSYRLLAARIDQPLHLGITEAGGARSGAVKSAIGLGLLLSEGIGDTLRISLAADPVEEVKVGFDILKSLRIRSRGINFIACPTCSRQEFDVIGTVNALEQRLEDIITPMDVSIIGCVVNGPGEALVSTIGVTGGHNKSGFYEDGVRQRERFDNEQMIDQLEAKIRAKASMMDENQRITVNLVDK.

The [4Fe-4S] cluster site is built by cysteine 270, cysteine 273, cysteine 305, and glutamate 312.

Belongs to the IspG family. It depends on [4Fe-4S] cluster as a cofactor.

The catalysed reaction is (2E)-4-hydroxy-3-methylbut-2-enyl diphosphate + oxidized [flavodoxin] + H2O + 2 H(+) = 2-C-methyl-D-erythritol 2,4-cyclic diphosphate + reduced [flavodoxin]. The protein operates within isoprenoid biosynthesis; isopentenyl diphosphate biosynthesis via DXP pathway; isopentenyl diphosphate from 1-deoxy-D-xylulose 5-phosphate: step 5/6. In terms of biological role, converts 2C-methyl-D-erythritol 2,4-cyclodiphosphate (ME-2,4cPP) into 1-hydroxy-2-methyl-2-(E)-butenyl 4-diphosphate. The polypeptide is 4-hydroxy-3-methylbut-2-en-1-yl diphosphate synthase (flavodoxin) (Pectobacterium carotovorum subsp. carotovorum (strain PC1)).